Consider the following 164-residue polypeptide: UPF0304 protein Ent638_2838 (164 aa).

Belongs to the UPF0304 family.

The chain is UPF0304 protein Ent638_2838 from Enterobacter sp. (strain 638).